Here is a 112-residue protein sequence, read N- to C-terminus: Evasin P1095 (112 aa).

An N-terminal signal peptide occupies residues 1–23; it reads MELNAFTILQIAVFIAVGYHANT. Intrachain disulfides connect Cys48–Cys66, Cys52–Cys68, and Cys62–Cys79. Asn51 carries an N-linked (GlcNAc...) asparagine glycan. The disordered stretch occupies residues 89–112; it reads GDPNDDPKINEATPQTQIFEKKRK.

Its subcellular location is the secreted. In terms of biological role, salivary chemokine-binding protein which binds to host chemokine CXCL8. The chain is Evasin P1095 from Ixodes ricinus (Common tick).